A 370-amino-acid polypeptide reads, in one-letter code: Vasopressin V2 receptor (370 aa).

A compositionally biased stretch (polar residues) spans 1 to 21 (MFMASTTSAVPWHLSQPTPAG). A disordered region spans residues 1–26 (MFMASTTSAVPWHLSQPTPAGNGSEG). At 1 to 38 (MFMASTTSAVPWHLSQPTPAGNGSEGELLTARDPLLAQ) the chain is on the extracellular side. The N-linked (GlcNAc...) asparagine glycan is linked to Asn-22. A helical membrane pass occupies residues 39 to 63 (AELALLSTVFVAVALSNGLVLGALV). The Cytoplasmic portion of the chain corresponds to 64 to 77 (RRGRRGRWAPMHVF). A helical transmembrane segment spans residues 78-98 (IGHLCLADLAVALFQVLPQLA). The Extracellular segment spans residues 99–113 (WDATDRFRGPDALCR). A helical membrane pass occupies residues 114-135 (AVKYLQMVGMYASSYMILAMTL). The Cytoplasmic portion of the chain corresponds to 136–159 (DRHRAICRPMLAHRHGGGTHWNRP). A helical transmembrane segment spans residues 160–180 (VLLAWAFSLLFSLPQLFIFAQ). Residues 181–199 (RDVDGSGVLDCWARFAEPW) are Extracellular-facing. A helical transmembrane segment spans residues 200-219 (GLRAYVTWIALMVFVAPALG). The Cytoplasmic portion of the chain corresponds to 220–270 (IAACQVLIFREIHASLGPGPVPRAGGPRRGCRPGSPAEGARVSAAVAKTVK). The helical transmembrane segment at 271–292 (MTLVIVIVYVLCWAPFFLVQLW) threads the bilayer. At 293-307 (AAWDPEAPREGPPFV) the chain is on the extracellular side. Residues 308-327 (LLMLLASLNSCTNPWIYASF) traverse the membrane as a helical segment. Residues 328-370 (SSSISSELRSLLCCTWRRAPPSPGPQEESCATASSFLAKDTPS) lie on the Cytoplasmic side of the membrane. Residues Cys-340 and Cys-341 are each lipidated (S-palmitoyl cysteine). A disordered region spans residues 347 to 370 (PPSPGPQEESCATASSFLAKDTPS).

Belongs to the G-protein coupled receptor 1 family. Vasopressin/oxytocin receptor subfamily. As to quaternary structure, interacts with ARRDC4. Identified in a complex containing at least ARRDC4, V2R and HGS. Interacts with TMEM147.

Its subcellular location is the cell membrane. Its function is as follows. Receptor for arginine vasopressin. The activity of this receptor is mediated by G proteins which activate adenylate cyclase. Involved in renal water reabsorption. This chain is Vasopressin V2 receptor (AVPR2), found in Bos taurus (Bovine).